Reading from the N-terminus, the 137-residue chain is Large ribosomal subunit protein uL16 (137 aa).

This sequence belongs to the universal ribosomal protein uL16 family. Part of the 50S ribosomal subunit.

Functionally, binds 23S rRNA and is also seen to make contacts with the A and possibly P site tRNAs. The sequence is that of Large ribosomal subunit protein uL16 from Rhodopseudomonas palustris (strain BisA53).